The chain runs to 61 residues: MSFLKKSLFLVLFLGLVSFSICEEEKRETEEEENEDEMNEESEEKRESPERPPGFTPFRVD.

The signal sequence occupies residues 1 to 22; it reads MSFLKKSLFLVLFLGLVSFSIC. A propeptide spanning residues 23–50 is cleaved from the precursor; the sequence is EEEKRETEEEENEDEMNEESEEKRESPE. The tract at residues 24-61 is disordered; the sequence is EEKRETEEEENEDEMNEESEEKRESPERPPGFTPFRVD. The span at 30–42 shows a compositional bias: acidic residues; it reads EEEENEDEMNEES.

It belongs to the frog skin active peptide (FSAP) family. Bradykinin-related peptide subfamily. Expressed by the skin glands.

The protein localises to the secreted. Induces relaxation of rat smooth muscle from tail artery and contraction of that from ileum, urinary bladder and uterus. Binds to both bradykinin receptor B1 (BDKRB1) and B2 (BDKRB2). This is [Thr6, Val10, Asp11]-phyllokinin from Agalychnis spurrelli (Gliding leaf frog).